The chain runs to 118 residues: Cytochrome b-c1 complex subunit 7 (118 aa).

An igE-binding. Immunodominant epitope; induces specific IgE antibody production in mice. Causes degranulation of rat basophilic leukemia (RBL) cells and the release of beta-hexosaminidase from them region spans residues 1 to 32 (MVHLTKTLRFINNPGFRKFYYGLQGYNKYGLY).

The protein belongs to the UQCRB/QCR7 family. As to quaternary structure, component of the ubiquinol-cytochrome c oxidoreductase (cytochrome b-c1 complex, complex III, CIII), a multisubunit enzyme composed of 3 respiratory subunits cytochrome b, cytochrome c1 and Rieske protein, 2 core protein subunits, and additional low-molecular weight protein subunits. The complex exists as an obligatory dimer and forms supercomplexes (SCs) in the inner mitochondrial membrane with cytochrome c oxidase (complex IV, CIV).

The protein resides in the mitochondrion inner membrane. In terms of biological role, component of the ubiquinol-cytochrome c oxidoreductase, a multisubunit transmembrane complex that is part of the mitochondrial electron transport chain which drives oxidative phosphorylation. The respiratory chain contains 3 multisubunit complexes succinate dehydrogenase (complex II, CII), ubiquinol-cytochrome c oxidoreductase (cytochrome b-c1 complex, complex III, CIII) and cytochrome c oxidase (complex IV, CIV), that cooperate to transfer electrons derived from NADH and succinate to molecular oxygen, creating an electrochemical gradient over the inner membrane that drives transmembrane transport and the ATP synthase. The cytochrome b-c1 complex catalyzes electron transfer from ubiquinol to cytochrome c, linking this redox reaction to translocation of protons across the mitochondrial inner membrane, with protons being carried across the membrane as hydrogens on the quinol. In the process called Q cycle, 2 protons are consumed from the matrix, 4 protons are released into the intermembrane space and 2 electrons are passed to cytochrome c. The polypeptide is Cytochrome b-c1 complex subunit 7 (Dermatophagoides pteronyssinus (European house dust mite)).